A 43-amino-acid chain; its full sequence is DRDSCVDKSKCSKYGYYGQCDKCCKKAGDRAGNCVYFKCKCNQ.

4 cysteine pairs are disulfide-bonded: cysteine 5–cysteine 23, cysteine 11–cysteine 34, cysteine 20–cysteine 39, and cysteine 24–cysteine 41.

The protein belongs to the ergtoxin family. Gamma-KTx 4 subfamily. As to expression, expressed by the venom gland.

The protein resides in the secreted. In terms of biological role, reversibly blocks Kv11/ERG potassium channels. This is Potassium channel toxin gamma-KTx 4.6 from Centruroides limpidus (Mexican scorpion).